Reading from the N-terminus, the 514-residue chain is GMP synthase [glutamine-hydrolyzing] (514 aa).

Residues 9–199 (KIIVLDFGSQ…ALNVCGCKGD (191 aa)) enclose the Glutamine amidotransferase type-1 domain. Catalysis depends on Cys-86, which acts as the Nucleophile. Residues His-173 and Glu-175 contribute to the active site. A GMPS ATP-PPase domain is found at 200 to 389 (WTMENFSEVE…LGMPDAIVWR (190 aa)). 227–233 (SGGVDSS) contributes to the ATP binding site.

Homodimer.

The catalysed reaction is XMP + L-glutamine + ATP + H2O = GMP + L-glutamate + AMP + diphosphate + 2 H(+). The protein operates within purine metabolism; GMP biosynthesis; GMP from XMP (L-Gln route): step 1/1. In terms of biological role, catalyzes the synthesis of GMP from XMP. In Listeria monocytogenes serotype 4b (strain F2365), this protein is GMP synthase [glutamine-hydrolyzing].